The primary structure comprises 324 residues: D-alanine--D-alanine ligase (324 aa).

Residues 112–312 (KAVLAAAGVT…FDQLVLWIVE (201 aa)) enclose the ATP-grasp domain. 139-193 (LQPPYVVKPNAEGSSVGVFIIKEGANRPPEEVGAPSWTFGEEVMVEPYIQGMELA) contributes to the ATP binding site. 3 residues coordinate Mg(2+): Asp265, Glu279, and Asn281.

The protein belongs to the D-alanine--D-alanine ligase family. Requires Mg(2+) as cofactor. It depends on Mn(2+) as a cofactor.

Its subcellular location is the cytoplasm. It catalyses the reaction 2 D-alanine + ATP = D-alanyl-D-alanine + ADP + phosphate + H(+). Its pathway is cell wall biogenesis; peptidoglycan biosynthesis. Its function is as follows. Cell wall formation. The polypeptide is D-alanine--D-alanine ligase (Caulobacter vibrioides (strain ATCC 19089 / CIP 103742 / CB 15) (Caulobacter crescentus)).